The sequence spans 2156 residues: MSDTPSTGFSIIHPTSSEGQVPPPRHLSLTHPVVAKRISFYKSGDPQFGGVRVVVNPRSFKSFDALLDNLSRKVPLPFGVRNISTPRGRHSITRLEELEDGESYLCSHGRKVQPVDLDKARRRPRPWLSSRAISAHSPPHPVAVAAPGMPRPPRSLVVFRNGDPKTRRAVLLSRRVTQSFEAFLQHLTEVMQRPVVKLYATDGRRVPSLQAVILSSGAVVAAGREPFKPGNYDIQKYLLPARLPGISQRVYPKGNAKSESRKISTHMSSSSRSQIYSVSSEKTHNNDCYLDYSFVPEKYLALEKNDSQNLPIYPSEDDIEKSIIFNQDGTMTVEMKVRFRIKEEETIKWTTTVSKTGPSNNDEKSEMSFPGRTESRSSGLKLAACSFSADVSPMERSSNQEGSLAEEINIQMTDQVAETCSSASWENATVDTDIIQGTQDQAKHRFYRPPTPGLRRVRQKKSVIGSVTLVSETEVQEKMIGQFSYSEERESGENKSEYHMFTHSCSKMSSVSNKPVLVQINNNDQMEESSLERKKENSLLKSSAISAGVIEITSQKMLEMSHNNGLPSTISNNSIVEEDVVDCVVLDNKTGIKNFKTYGNTNDRFSPISADATHFSSNNSGTDKNISEAPASEASSTVTARIDRLINEFAQCGLTKLPKNEKKILSSVASKKKKKSRQQAINSRYQDGQLATKGILNKNERINTKGRITKEMIVQDSDSPLKGGILCEEDLQKSDTVIESNTFCSKSNLNSTISKNFHRNKLNTTQNSKVQGLLTKRKSRSLNKISLGAPKKREIGQRDKVFPHNESKYCKSTFENKSLFHVFNILEQKPKDFYAPQSQAEVASGYLRGMAKKSLVSKVTDSHITLKSQKKRKGDKVKASAILSKQHATTRANSLASLKKPDFPEAIAHHSIQNYIQSWLQNINPYPTLKPIKSAPVCRNETSVVNCSNNSFSGNDPHTNSGKISNFVMESNKHITKIAGLTGDNLCKEGDKSFIANDTGEEDLHETQVGSLNDAYLVPLHEHCTLSQSAINDHNTKSHIAAEKSGPEKKLVYQEINLARKRQSVEAAIQVDPIEEETPKDLLPVLMLHQLQASVPGIHKTQNGVVQMPGSLAGVPFHSAICNSSTNLLLAWLLVLNLKGSMNSFCQVDAHKATNKSSETLALLEILKHIAITEEADDLKAAVANLVESTTSHFGLSEKEQDMVPIDLSANCSTVNIQSVPKCSENERTQGISSLDGGCSASEACAPEVCVLEVTCSPCEMCTVNKAYSPKETCNPSDTFFPSDGYGVDQTSMNKACFLGEVCSLTDTVFSDKACAQKENHTYEGACPIDETYVPVNVCNTIDFLNSKENTYTDNLDSTEELERGDDIQKDLNILTDPEYKNGFNTLVSHQNVSNLSSCGLCLSEKEAELDKKHSSLDDFENCSLRKFQDENAYTSFDMEEPRTSEEPGSITNSMTSSERNISELESFEELENHDTDIFNTVVNGGEQATEELIQEEVEASKTLELIDISSKNIMEEKRMNGIIYEIISKRLATPPSLDFCYDSKQNSEKETNEGETKMVKMMVKTMETGSYSESSPDLKKCIKSPVTSDWSDYRPDSDSEQPYKTSSDDPNDSGELTQEKEYNIGFVKRAIEKLYGKADIIKPSFFPGSTRKSQVCPYNSVEFQCSRKASLYDSEGQSFGSSEQVSSSSSMLQEFQEERQDKCDVSAVRDNYCRGDIVEPGTKQNDDSRILTDIEEGVLIDKGKWLLKENHLLRMSSENPGMCGNADTTSVDTLLDNNSSEVPYSHFGNLAPGPTMDELSSSELEELTQPLELKCNYFNMPHGSDSEPFHEDLLDVRNETCAKERIANHHTEEKGSHQSERVCTSVTHSFISAGNKVYPVSDDAIKNQPLPGSNMIHGTLQEADSLDKLYALCGQHCPILTVIIQPMNEEDRGFAYRKESDIENFLGFYLWMKIHPYLLQTDKNVFREENNKASMRQNLIDNAIGDIFDQFYFSNTFDLMGKRRKQKRINFLGLEEEGNLKKFQPDLKERFCMNFLHTSLLVVGNVDSNTQDLSGQTNEIFKAVDENNNLLNNRFQGSRTNLNQVVRENINCHYFFEMLGQACLLDICQVETSLNISNRNILELCMFEGENLFIWEEEDILNLTDLESSREQEDL.

Residues 1–19 (MSDTPSTGFSIIHPTSSEG) show a composition bias toward polar residues. The disordered stretch occupies residues 1–25 (MSDTPSTGFSIIHPTSSEGQVPPPR). Doublecortin domains follow at residues 36–118 (KRIS…VDLD) and 154–233 (RSLV…GNYD). 4 disordered regions span residues 353 to 375 (VSKT…RTES), 666 to 686 (SSVA…SRYQ), 1438 to 1458 (DMEE…MTSS), and 1590 to 1621 (DWSD…TQEK).

As to quaternary structure, interacts (via the doublecortin domains) with microtubules. Interacts with RP1L1. Interacts with MAK. As to expression, expressed in retina. Not expressed in heart, brain, placenta, lung, liver, skeletal muscle, kidney, spleen and pancreas.

It localises to the cytoplasm. The protein resides in the cytoskeleton. It is found in the cilium axoneme. The protein localises to the cell projection. Its subcellular location is the cilium. It localises to the photoreceptor outer segment. In terms of biological role, microtubule-associated protein regulating the stability and length of the microtubule-based axoneme of photoreceptors. Required for the differentiation of photoreceptor cells, it plays a role in the organization of the outer segment of rod and cone photoreceptors ensuring the correct orientation and higher-order stacking of outer segment disks along the photoreceptor axoneme. The protein is Oxygen-regulated protein 1 (RP1) of Homo sapiens (Human).